Here is a 562-residue protein sequence, read N- to C-terminus: Glutamate--tRNA ligase (562 aa).

The 'HIGH' region signature appears at 90–100; the sequence is PNPSGLLHIGH.

The protein belongs to the class-I aminoacyl-tRNA synthetase family. Glutamate--tRNA ligase type 2 subfamily.

It localises to the cytoplasm. The catalysed reaction is tRNA(Glu) + L-glutamate + ATP = L-glutamyl-tRNA(Glu) + AMP + diphosphate. Catalyzes the attachment of glutamate to tRNA(Glu) in a two-step reaction: glutamate is first activated by ATP to form Glu-AMP and then transferred to the acceptor end of tRNA(Glu). This chain is Glutamate--tRNA ligase, found in Nanoarchaeum equitans (strain Kin4-M).